The chain runs to 339 residues: uncharacterized protein (339 aa).

Positions 1-29 are cleaved as a signal peptide; the sequence is MIKQVCKNITICSLALSTALTVFPASSYA.

The protein belongs to the aerolysin family.

This is an uncharacterized protein from Staphylococcus aureus (strain MRSA252).